The sequence spans 291 residues: Tumor necrosis factor ligand superfamily member 10 (291 aa).

Topologically, residues 1-17 are cytoplasmic; sequence MPSSGALKDLSFSQHFR. A helical; Signal-anchor for type II membrane protein membrane pass occupies residues 18 to 38; that stretch reads MMVICIVLLQVLLQAVSVAVT. Over 39–291 the chain is Extracellular; that stretch reads YMYFTNEMKQ…ASFFGAFLIN (253 aa). An N-linked (GlcNAc...) asparagine glycan is attached at asparagine 52. The region spanning 126–290 is the THD domain; sequence VAAHITGITR…EASFFGAFLI (165 aa). A Zn(2+)-binding site is contributed by cysteine 240.

Belongs to the tumor necrosis factor family. Homotrimer. One TNFSF10 homotrimer interacts with three TNFSF10A mononers. One TNFSF10 homotrimer interacts with three TNFSF10B mononers. Post-translationally, tyrosine phosphorylated by PKDCC/VLK. As to expression, widespread.

The protein localises to the cell membrane. The protein resides in the secreted. Its function is as follows. Cytokine that binds to TNFRSF10A/TRAILR1, TNFRSF10B/TRAILR2, TNFRSF10C/TRAILR3, TNFRSF10D/TRAILR4 and possibly also to TNFRSF11B/OPG. Induces apoptosis. Its activity may be modulated by binding to the decoy receptors TNFRSF10C/TRAILR3, TNFRSF10D/TRAILR4 and TNFRSF11B/OPG that cannot induce apoptosis. The polypeptide is Tumor necrosis factor ligand superfamily member 10 (Tnfsf10) (Mus musculus (Mouse)).